The following is a 235-amino-acid chain: KNMITGAAQMDGAILVVSAADGPMPQTREHILLAKQVGVPNIVVFLNKQDQVDDEELLELVELEVRELLGQYGFPGDNIPFVAGSALRALENITQNNTIQRGENEWVDKIHSLMDAVDEYIPTPVRDVEKTFLMAVEDVFSITGRGTVTTGRIERGIIKVGDTIEIVGLRETTTTTITGLEMFQKTLDEGMAGDNIGILLRGVQKKDIERGMVLAQPGTITPHTQFEAEVYVLTK.

A tr-type G domain is found at 1-125 (KNMITGAAQM…AVDEYIPTPV (125 aa)). A GTP-binding site is contributed by 47–50 (NKQD).

Belongs to the TRAFAC class translation factor GTPase superfamily. Classic translation factor GTPase family. EF-Tu/EF-1A subfamily.

The protein resides in the plastid. Its subcellular location is the chloroplast. It catalyses the reaction GTP + H2O = GDP + phosphate + H(+). In terms of biological role, GTP hydrolase that promotes the GTP-dependent binding of aminoacyl-tRNA to the A-site of ribosomes during protein biosynthesis. The polypeptide is Elongation factor Tu, chloroplastic (tufA) (Gracilariopsis lemaneiformis (Red alga)).